A 330-amino-acid polypeptide reads, in one-letter code: Beta-ketoacyl-[acyl-carrier-protein] synthase III (330 aa).

Active-site residues include Cys115 and His255. The tract at residues 256-260 is ACP-binding; sequence QANFR. Residue Asn285 is part of the active site.

Belongs to the thiolase-like superfamily. FabH family. As to quaternary structure, homodimer.

Its subcellular location is the cytoplasm. The enzyme catalyses malonyl-[ACP] + acetyl-CoA + H(+) = 3-oxobutanoyl-[ACP] + CO2 + CoA. It participates in lipid metabolism; fatty acid biosynthesis. In terms of biological role, catalyzes the condensation reaction of fatty acid synthesis by the addition to an acyl acceptor of two carbons from malonyl-ACP. Catalyzes the first condensation reaction which initiates fatty acid synthesis and may therefore play a role in governing the total rate of fatty acid production. Possesses both acetoacetyl-ACP synthase and acetyl transacylase activities. Its substrate specificity determines the biosynthesis of branched-chain and/or straight-chain of fatty acids. This is Beta-ketoacyl-[acyl-carrier-protein] synthase III from Helicobacter pylori (strain G27).